We begin with the raw amino-acid sequence, 179 residues long: ATP-dependent protease subunit HslV (179 aa).

Thr-7 is a catalytic residue. Na(+) contacts are provided by Ala-162, Cys-165, and Thr-168.

Belongs to the peptidase T1B family. HslV subfamily. A double ring-shaped homohexamer of HslV is capped on each side by a ring-shaped HslU homohexamer. The assembly of the HslU/HslV complex is dependent on binding of ATP.

It is found in the cytoplasm. It catalyses the reaction ATP-dependent cleavage of peptide bonds with broad specificity.. With respect to regulation, allosterically activated by HslU binding. Its function is as follows. Protease subunit of a proteasome-like degradation complex believed to be a general protein degrading machinery. This chain is ATP-dependent protease subunit HslV, found in Nitrosococcus oceani (strain ATCC 19707 / BCRC 17464 / JCM 30415 / NCIMB 11848 / C-107).